The sequence spans 527 residues: Probable bifunctional tRNA threonylcarbamoyladenosine biosynthesis protein (527 aa).

Residues 1-323 (MPDIMPDDGL…YRADEVEVAW (323 aa)) form a kae1 region. Fe cation is bound by residues histidine 110, histidine 114, and tyrosine 131. Residues 131-135 (YASGA), aspartate 163, glycine 176, glutamate 180, and asparagine 256 contribute to the L-threonylcarbamoyladenylate site. Aspartate 284 contacts Fe cation. In terms of domain architecture, Protein kinase spans 333 to 527 (IGPHEGGVAR…HEVELRGRYL (195 aa)). ATP is bound by residues 340 to 348 (VARGAEAVV) and lysine 357. The active-site Proton acceptor; for kinase activity is the aspartate 444.

In the N-terminal section; belongs to the KAE1 / TsaD family. It in the C-terminal section; belongs to the protein kinase superfamily. Tyr protein kinase family. BUD32 subfamily. As to quaternary structure, component of the KEOPS complex that consists of Kae1, Bud32, Cgi121 and Pcc1; the whole complex dimerizes. It depends on Fe(2+) as a cofactor.

It is found in the cytoplasm. It catalyses the reaction L-seryl-[protein] + ATP = O-phospho-L-seryl-[protein] + ADP + H(+). The catalysed reaction is L-threonyl-[protein] + ATP = O-phospho-L-threonyl-[protein] + ADP + H(+). It carries out the reaction L-threonylcarbamoyladenylate + adenosine(37) in tRNA = N(6)-L-threonylcarbamoyladenosine(37) in tRNA + AMP + H(+). Its function is as follows. Required for the formation of a threonylcarbamoyl group on adenosine at position 37 (t(6)A37) in tRNAs that read codons beginning with adenine. Is a component of the KEOPS complex that is probably involved in the transfer of the threonylcarbamoyl moiety of threonylcarbamoyl-AMP (TC-AMP) to the N6 group of A37. The Kae1 domain likely plays a direct catalytic role in this reaction. The Bud32 domain probably displays kinase activity that regulates Kae1 function. This is Probable bifunctional tRNA threonylcarbamoyladenosine biosynthesis protein from Methanoculleus marisnigri (strain ATCC 35101 / DSM 1498 / JR1).